A 102-amino-acid polypeptide reads, in one-letter code: Malonate decarboxylase acyl carrier protein (102 aa).

Serine 27 is subject to O-(phosphoribosyl dephospho-coenzyme A)serine.

It belongs to the MdcC family. In terms of processing, covalently binds the prosthetic group of malonate decarboxylase.

The protein resides in the cytoplasm. Functionally, subunit of malonate decarboxylase, it is an acyl carrier protein to which acetyl and malonyl thioester residues are bound via a 2'-(5''-phosphoribosyl)-3'-dephospho-CoA prosthetic group and turn over during the catalytic mechanism. The protein is Malonate decarboxylase acyl carrier protein of Acinetobacter calcoaceticus.